Reading from the N-terminus, the 425-residue chain is GTPase Obg (425 aa).

The Obg domain occupies methionine 1–valine 158. An OBG-type G domain is found at alanine 159–arginine 330. GTP is bound by residues glycine 165–serine 172, phenylalanine 190–threonine 194, aspartate 212–glycine 215, asparagine 282–aspartate 285, and serine 311–alanine 313. Mg(2+)-binding residues include serine 172 and threonine 192. The OCT domain occupies valine 345 to alanine 422.

This sequence belongs to the TRAFAC class OBG-HflX-like GTPase superfamily. OBG GTPase family. In terms of assembly, monomer. Mg(2+) serves as cofactor.

It localises to the cytoplasm. Functionally, an essential GTPase which binds GTP, GDP and possibly (p)ppGpp with moderate affinity, with high nucleotide exchange rates and a fairly low GTP hydrolysis rate. Plays a role in control of the cell cycle, stress response, ribosome biogenesis and in those bacteria that undergo differentiation, in morphogenesis control. This chain is GTPase Obg, found in Symbiobacterium thermophilum (strain DSM 24528 / JCM 14929 / IAM 14863 / T).